Consider the following 526-residue polypeptide: Bifunctional purine biosynthesis protein PurH (526 aa).

The MGS-like domain occupies 1 to 147 (MSVIKRALIS…KNWKHVAIVT (147 aa)).

Belongs to the PurH family.

It carries out the reaction (6R)-10-formyltetrahydrofolate + 5-amino-1-(5-phospho-beta-D-ribosyl)imidazole-4-carboxamide = 5-formamido-1-(5-phospho-D-ribosyl)imidazole-4-carboxamide + (6S)-5,6,7,8-tetrahydrofolate. The catalysed reaction is IMP + H2O = 5-formamido-1-(5-phospho-D-ribosyl)imidazole-4-carboxamide. It functions in the pathway purine metabolism; IMP biosynthesis via de novo pathway; 5-formamido-1-(5-phospho-D-ribosyl)imidazole-4-carboxamide from 5-amino-1-(5-phospho-D-ribosyl)imidazole-4-carboxamide (10-formyl THF route): step 1/1. The protein operates within purine metabolism; IMP biosynthesis via de novo pathway; IMP from 5-formamido-1-(5-phospho-D-ribosyl)imidazole-4-carboxamide: step 1/1. This chain is Bifunctional purine biosynthesis protein PurH, found in Neisseria gonorrhoeae (strain ATCC 700825 / FA 1090).